A 360-amino-acid polypeptide reads, in one-letter code: Phospho-N-acetylmuramoyl-pentapeptide-transferase (360 aa).

10 consecutive transmembrane segments (helical) span residues 21–41 (YITV…LWIG), 73–93 (TMGG…WANL), 94–114 (ANSY…IGFV), 132–152 (WKYF…YWLG), 168–188 (IMPQ…VGTG), 199–219 (GLAI…AWAT), 239–259 (VVVF…FNTY), 263–283 (VFMG…VAIL), 288–308 (FLLV…ILQV), and 338–358 (VIIR…VTLK).

It belongs to the glycosyltransferase 4 family. MraY subfamily. The cofactor is Mg(2+).

The protein localises to the cell inner membrane. It carries out the reaction UDP-N-acetyl-alpha-D-muramoyl-L-alanyl-gamma-D-glutamyl-meso-2,6-diaminopimeloyl-D-alanyl-D-alanine + di-trans,octa-cis-undecaprenyl phosphate = di-trans,octa-cis-undecaprenyl diphospho-N-acetyl-alpha-D-muramoyl-L-alanyl-D-glutamyl-meso-2,6-diaminopimeloyl-D-alanyl-D-alanine + UMP. Its pathway is cell wall biogenesis; peptidoglycan biosynthesis. Functionally, catalyzes the initial step of the lipid cycle reactions in the biosynthesis of the cell wall peptidoglycan: transfers peptidoglycan precursor phospho-MurNAc-pentapeptide from UDP-MurNAc-pentapeptide onto the lipid carrier undecaprenyl phosphate, yielding undecaprenyl-pyrophosphoryl-MurNAc-pentapeptide, known as lipid I. This is Phospho-N-acetylmuramoyl-pentapeptide-transferase from Haemophilus influenzae (strain 86-028NP).